Consider the following 543-residue polypeptide: Probable zinc transporter protein DDB_G0283629 (543 aa).

The interval 1–175 (MENFKNNELE…EESKPLNQLR (175 aa)) is disordered. The Cytoplasmic segment spans residues 1–186 (MENFKNNELE…LDSKKKARYS (186 aa)). Low complexity-rich tracts occupy residues 11–26 (SSPI…SINN) and 41–55 (NNNN…NSHI). Composition is skewed to basic and acidic residues over residues 56 to 66 (NNHDHKHNHEH) and 76 to 104 (HNHD…EHNV). Positions 105-116 (GNKNLLTNNNNQ) are enriched in low complexity. Residues 130-140 (EDGSSSGGGGG) are compositionally biased toward gly residues. A helical transmembrane segment spans residues 187-207 (LILALTLTTIFMVGEIVGGYF). Residues 208 to 216 (ANSLAIMTD) lie on the Extracellular side of the membrane. The chain crosses the membrane as a helical span at residues 217 to 237 (AAHLLTDIGAMFLSLFAMWIS). Residues 238–251 (QHPPTSSMSFGFHR) are Cytoplasmic-facing. Residues 252–272 (AEILGALVSVLMIWALTGVLV) traverse the membrane as a helical segment. The Extracellular portion of the chain corresponds to 273–289 (YEAIQRILYPPDAVDGK). A helical transmembrane segment spans residues 290–310 (IMFIIASCGLFINIIDAIILH). Topologically, residues 311–375 (WGSGGHGHSH…VRNINVHSAY (65 aa)) are cytoplasmic. Residues 319 to 342 (SHGGGHGHSHGIGGGTQKKKSKKN) form a disordered region. The chain crosses the membrane as a helical span at residues 376–396 (IHVLGDCFQSIGVMVASCIIW). At 397-402 (VHPHWK) the chain is on the extracellular side. A helical transmembrane segment spans residues 403–423 (IADPITTLIFSVIVLGTTIKL). Residues 424-543 (LRESLGVLME…NDNLSSPPNQ (120 aa)) are Cytoplasmic-facing. Residues 516–543 (KCKDHSCPPPKPKKKKIKNDNLSSPPNQ) form a disordered region.

This sequence belongs to the cation diffusion facilitator (CDF) transporter (TC 2.A.4) family. SLC30A subfamily.

It localises to the membrane. In terms of biological role, may be involved in zinc transport from the cytoplasm to either intracellular organelles or extracellular spaces. This is Probable zinc transporter protein DDB_G0283629 from Dictyostelium discoideum (Social amoeba).